Here is a 341-residue protein sequence, read N- to C-terminus: UPF0284 protein Ta0078 (341 aa).

The protein belongs to the UPF0284 family.

The protein is UPF0284 protein Ta0078 of Thermoplasma acidophilum (strain ATCC 25905 / DSM 1728 / JCM 9062 / NBRC 15155 / AMRC-C165).